A 114-amino-acid chain; its full sequence is MFAFKKAQRLLKKNDFDFVFESAKKITTEDFIFLFRENKLGYARLGLALSKKMIAKAHDRNRIKRLLRESFRHTNLPAVDIIILARPGLAKKTNLGINTKLNKTWEKLTSCYGK.

It belongs to the RnpA family. As to quaternary structure, consists of a catalytic RNA component (M1 or rnpB) and a protein subunit.

It catalyses the reaction Endonucleolytic cleavage of RNA, removing 5'-extranucleotides from tRNA precursor.. Its function is as follows. RNaseP catalyzes the removal of the 5'-leader sequence from pre-tRNA to produce the mature 5'-terminus. It can also cleave other RNA substrates such as 4.5S RNA. The protein component plays an auxiliary but essential role in vivo by binding to the 5'-leader sequence and broadening the substrate specificity of the ribozyme. The chain is Ribonuclease P protein component from Legionella pneumophila (strain Lens).